A 202-amino-acid polypeptide reads, in one-letter code: Protein-methionine-sulfoxide reductase heme-binding subunit MsrQ (202 aa).

The next 6 membrane-spanning stretches (helical) occupy residues 8–28 (LAVFLGALAVPAWWLYQAWIF), 42–62 (LGLGALVLLLLTLAMTPLQKL), 75–95 (LGLWCFTYVLLHLSAYCVFIL), 110–130 (PYIIVGMLGFVCLFLLAITSN), 147–167 (LVYLILGLGLLHMLWVVRADL), and 169–189 (EWTLYAVVGASLMLLRLPSIA).

It belongs to the MsrQ family. As to quaternary structure, heterodimer of a catalytic subunit (MsrP) and a heme-binding subunit (MsrQ). It depends on FMN as a cofactor. Heme b serves as cofactor.

Its subcellular location is the cell inner membrane. Functionally, part of the MsrPQ system that repairs oxidized periplasmic proteins containing methionine sulfoxide residues (Met-O), using respiratory chain electrons. Thus protects these proteins from oxidative-stress damage caused by reactive species of oxygen and chlorine generated by the host defense mechanisms. MsrPQ is essential for the maintenance of envelope integrity under bleach stress, rescuing a wide series of structurally unrelated periplasmic proteins from methionine oxidation. MsrQ provides electrons for reduction to the reductase catalytic subunit MsrP, using the quinone pool of the respiratory chain. In Pseudomonas aeruginosa (strain UCBPP-PA14), this protein is Protein-methionine-sulfoxide reductase heme-binding subunit MsrQ.